A 149-amino-acid chain; its full sequence is D-aminoacyl-tRNA deacylase (149 aa).

Residues 137-138 (GP) carry the Gly-cisPro motif, important for rejection of L-amino acids motif.

This sequence belongs to the DTD family. As to quaternary structure, homodimer.

The protein resides in the cytoplasm. It carries out the reaction glycyl-tRNA(Ala) + H2O = tRNA(Ala) + glycine + H(+). It catalyses the reaction a D-aminoacyl-tRNA + H2O = a tRNA + a D-alpha-amino acid + H(+). Its function is as follows. An aminoacyl-tRNA editing enzyme that deacylates mischarged D-aminoacyl-tRNAs. Also deacylates mischarged glycyl-tRNA(Ala), protecting cells against glycine mischarging by AlaRS. Acts via tRNA-based rather than protein-based catalysis; rejects L-amino acids rather than detecting D-amino acids in the active site. By recycling D-aminoacyl-tRNA to D-amino acids and free tRNA molecules, this enzyme counteracts the toxicity associated with the formation of D-aminoacyl-tRNA entities in vivo and helps enforce protein L-homochirality. This chain is D-aminoacyl-tRNA deacylase, found in Janthinobacterium sp. (strain Marseille) (Minibacterium massiliensis).